We begin with the raw amino-acid sequence, 435 residues long: ATP-dependent RNA helicase SUB2 (435 aa).

The tract at residues M1–D40 is disordered. Over residues E7–E17 the composition is skewed to acidic residues. Low complexity predominate over residues A19–G33. The short motif at T51 to Q79 is the Q motif element. Residues I82–I257 form the Helicase ATP-binding domain. Position 95–102 (A95–T102) interacts with ATP. Residues D204–D207 carry the DECD box motif. Residues G269–S430 enclose the Helicase C-terminal domain.

It belongs to the DEAD box helicase family. DECD subfamily.

The protein localises to the nucleus. It catalyses the reaction ATP + H2O = ADP + phosphate + H(+). Functionally, ATP-binding RNA helicase involved in transcription elongation and required for the export of mRNA out of the nucleus. SUB2 also plays a role in pre-mRNA splicing and spliceosome assembly. May be involved in rDNA and telomeric silencing, and maintenance of genome integrity. The polypeptide is ATP-dependent RNA helicase SUB2 (SUB2) (Debaryomyces hansenii (strain ATCC 36239 / CBS 767 / BCRC 21394 / JCM 1990 / NBRC 0083 / IGC 2968) (Yeast)).